A 33-amino-acid chain; its full sequence is Cyanophlyctin-beta (33 aa).

A disulfide bond links Cys27 and Cys33.

Expressed by the skin glands.

Its subcellular location is the secreted. Functionally, antimicrobial peptide active against E.coli (MIC=5 uM), K.pneumoniae (MIC=10 uM), B.cereus (MIC=7 uM) and S.aureus (MIC=12 uM). Has very little hemolytic activity. The sequence is that of Cyanophlyctin-beta from Euphlyctis cyanophlyctis (Skittering frog).